The chain runs to 604 residues: Kelch-like protein 15 (604 aa).

One can recognise a BTB domain in the interval 31–98 (LDVTLLIEEH…MYYGSLELSM (68 aa)). The 105-residue stretch at 133–237 (CAEVMRLLED…TPANIFEKVK (105 aa)) folds into the BACK domain. 5 Kelch repeats span residues 328–379 (FAFL…VIGK), 381–426 (IYAV…VLNG), 428–473 (LYIT…NKSK), 489–542 (KLYV…VLDK), and 544–592 (IMVL…SLHF).

The protein localises to the nucleus. The protein operates within protein modification; protein ubiquitination. Functionally, substrate-specific adapter for an E3 ubiquitin-protein ligase complex. The protein is Kelch-like protein 15 (klhl15) of Danio rerio (Zebrafish).